The chain runs to 183 residues: Adenylate kinase (183 aa).

G12–T17 serves as a coordination point for ATP. Residues S32 to V61 are NMP. AMP-binding positions include T33, R38, E59–V61, G86–R89, and Q93. Residues A127–D133 form an LID region. Position 128 (R128) interacts with ATP. Positions 130 and 141 each coordinate AMP. An ATP-binding site is contributed by G169.

It belongs to the adenylate kinase family. As to quaternary structure, monomer.

It localises to the cytoplasm. It carries out the reaction AMP + ATP = 2 ADP. Its pathway is purine metabolism; AMP biosynthesis via salvage pathway; AMP from ADP: step 1/1. Functionally, catalyzes the reversible transfer of the terminal phosphate group between ATP and AMP. Plays an important role in cellular energy homeostasis and in adenine nucleotide metabolism. The sequence is that of Adenylate kinase from Parasynechococcus marenigrum (strain WH8102).